The chain runs to 344 residues: Polyhomeotic-like protein 2 (344 aa).

A compositionally biased stretch (polar residues) spans 1 to 23 (MTSGNGSSPVPTAATGNRTQNGE). The segment at 1 to 28 (MTSGNGSSPVPTAATGNRTQNGENKPPQ) is disordered. The short motif at 25–53 (KPPQAVVKPQILTHFIEGFVIQEGAQPFP) is the HD1 element. The FCS-type zinc-finger motif lies at 114–148 (GDGDPPKLKCELCGRVDFEYKFKRSKRFCSMACAK). Cys123, Cys126, Cys142, and Cys146 together coordinate Zn(2+). The interval 165 to 269 (RSKLQKPTVA…LHSRDPIAMS (105 aa)) is disordered. Over residues 173 to 183 (VAKHARRRSRK) the composition is skewed to basic residues. Over residues 216–233 (KLSNSQEDSSRCSDNSSY) the composition is skewed to polar residues. Positions 234 to 248 (EEPLSPMSASSSLSR) are enriched in low complexity. The region spanning 280–344 (WNVEDVYDFV…YARISMLKDS (65 aa)) is the SAM domain.

As to quaternary structure, component of a PRC1-like complex.

It is found in the nucleus. Its function is as follows. Component of a Polycomb group (PcG) multiprotein PRC1-like complex, a complex class required to maintain the transcriptionally repressive state of many genes, including Hox genes, throughout development. PcG PRC1 complex acts via chromatin remodeling and modification of histones; it mediates monoubiquitination of histone H2A 'Lys-119', rendering chromatin heritably changed in its expressibility. The polypeptide is Polyhomeotic-like protein 2 (phc2) (Xenopus laevis (African clawed frog)).